Reading from the N-terminus, the 275-residue chain is MEVEGLELDTAELGPLEGSHQKLEAEEEQEESEDAAGGSKKRVVPGIVYLGHIPPRFRPLHVRNLLSAYGEVGRVFFQAEDGFVKRKKKAAAASAAGGKKRSKYSKDYTEGWVEFRDKRVAKRVAVSLHNTPMGSRRRSPFRYDLWNLKYLHRFTWSHLSEHLAFERQVRRQRLRAEVAQAKRETDFYLRSVERGQRFLAADGDSTRPNGSWAFAQRPTEQEMRARKAARPGGRERARLANAQDQARSNRGLLAKIFGAPTPSESRGNSSPARNS.

An N-acetylmethionine modification is found at Met1. Acidic residues-rich tracts occupy residues 1–10 and 25–34; these read MEVEGLELDT and AEEEQEESED. A disordered region spans residues 1 to 39; it reads MEVEGLELDTAELGPLEGSHQKLEAEEEQEESEDAAGGS. The 100-residue stretch at 46-145 folds into the RRM domain; sequence GIVYLGHIPP…RRRSPFRYDL (100 aa). The stretch at 164–194 forms a coiled coil; sequence AFERQVRRQRLRAEVAQAKRETDFYLRSVER. Positions 200–275 are disordered; the sequence is AADGDSTRPN…RGNSSPARNS (76 aa). Over residues 262-275 the composition is skewed to polar residues; the sequence is PSESRGNSSPARNS.

This sequence belongs to the ESF2/ABP1 family. Interacts with ESF1/ABTAP. Interacts with IGHMBP2.

It is found in the nucleus. The protein localises to the nucleolus. Could be a novel TATA-binding protein (TBP) which can function as a basal transcription activator. Can act as a regulator of basal transcription for class II genes. This chain is Activator of basal transcription 1 (ABT1), found in Bos taurus (Bovine).